A 429-amino-acid polypeptide reads, in one-letter code: Bifunctional protein GlmU (429 aa).

Positions 1-223 (MKTSILILAA…EDEFMGINDK (223 aa)) are pyrophosphorylase. UDP-N-acetyl-alpha-D-glucosamine-binding positions include 8–11 (LAAG), Lys22, and 81–82 (GT). Position 102 (Asp102) interacts with Mg(2+). Residues Gly135, Glu149, Asn164, and Asn221 each contribute to the UDP-N-acetyl-alpha-D-glucosamine site. Position 221 (Asn221) interacts with Mg(2+). The linker stretch occupies residues 224-244 (FELSIAENFMQKKIKKYWMQQ). The tract at residues 245–429 (GVIFHLPQST…KDYYYKKFQK (185 aa)) is N-acetyltransferase. 2 residues coordinate UDP-N-acetyl-alpha-D-glucosamine: Arg308 and Lys325. His336 serves as the catalytic Proton acceptor. 2 residues coordinate UDP-N-acetyl-alpha-D-glucosamine: Tyr339 and Asn350. Acetyl-CoA contacts are provided by residues 359–360 (NY), Ser378, Ala396, and Arg413.

In the N-terminal section; belongs to the N-acetylglucosamine-1-phosphate uridyltransferase family. This sequence in the C-terminal section; belongs to the transferase hexapeptide repeat family. As to quaternary structure, homotrimer. Requires Mg(2+) as cofactor.

The protein localises to the cytoplasm. The catalysed reaction is alpha-D-glucosamine 1-phosphate + acetyl-CoA = N-acetyl-alpha-D-glucosamine 1-phosphate + CoA + H(+). It carries out the reaction N-acetyl-alpha-D-glucosamine 1-phosphate + UTP + H(+) = UDP-N-acetyl-alpha-D-glucosamine + diphosphate. It participates in nucleotide-sugar biosynthesis; UDP-N-acetyl-alpha-D-glucosamine biosynthesis; N-acetyl-alpha-D-glucosamine 1-phosphate from alpha-D-glucosamine 6-phosphate (route II): step 2/2. It functions in the pathway nucleotide-sugar biosynthesis; UDP-N-acetyl-alpha-D-glucosamine biosynthesis; UDP-N-acetyl-alpha-D-glucosamine from N-acetyl-alpha-D-glucosamine 1-phosphate: step 1/1. The protein operates within bacterial outer membrane biogenesis; LPS lipid A biosynthesis. Catalyzes the last two sequential reactions in the de novo biosynthetic pathway for UDP-N-acetylglucosamine (UDP-GlcNAc). The C-terminal domain catalyzes the transfer of acetyl group from acetyl coenzyme A to glucosamine-1-phosphate (GlcN-1-P) to produce N-acetylglucosamine-1-phosphate (GlcNAc-1-P), which is converted into UDP-GlcNAc by the transfer of uridine 5-monophosphate (from uridine 5-triphosphate), a reaction catalyzed by the N-terminal domain. The protein is Bifunctional protein GlmU of Campylobacter jejuni subsp. jejuni serotype O:2 (strain ATCC 700819 / NCTC 11168).